Consider the following 640-residue polypeptide: Threonine--tRNA ligase (640 aa).

The 61-residue stretch at 1–61 (MPTITLPDGS…THDATLQIIT (61 aa)) folds into the TGS domain. The segment at 242–533 (DHRKIGKQLD…LIEHYAGVFP (292 aa)) is catalytic. 3 residues coordinate Zn(2+): C333, H384, and H510.

The protein belongs to the class-II aminoacyl-tRNA synthetase family. In terms of assembly, homodimer. The cofactor is Zn(2+).

The protein resides in the cytoplasm. It carries out the reaction tRNA(Thr) + L-threonine + ATP = L-threonyl-tRNA(Thr) + AMP + diphosphate + H(+). Catalyzes the attachment of threonine to tRNA(Thr) in a two-step reaction: L-threonine is first activated by ATP to form Thr-AMP and then transferred to the acceptor end of tRNA(Thr). Also edits incorrectly charged L-seryl-tRNA(Thr). The protein is Threonine--tRNA ligase of Pseudomonas putida (strain W619).